The chain runs to 712 residues: Envelope glycoprotein gp160 (712 aa).

The N-terminal stretch at 1 to 24 (MCGRNQLFVASLLASACLIYCVQY) is a signal peptide. Residues 25-673 (VTVFYGVPVW…LTSWIKYIQY (649 aa)) are Extracellular-facing. A glycan (N-linked (GlcNAc...) asparagine; by host) is linked at Asn36. A disulfide bond links Cys43 and Cys56. N-linked (GlcNAc...) asparagine; by host glycosylation is found at Asn69, Asn78, Asn113, Asn119, Asn131, Asn137, Asn145, Asn160, Asn173, Asn200, Asn232, Asn235, Asn242, Asn266, Asn272, Asn283, Asn294, Asn304, Asn359, Asn392, Asn402, Asn405, Asn442, Asn457, and Asn460. 5 cysteine pairs are disulfide-bonded: Cys100–Cys208, Cys107–Cys199, Cys112–Cys157, Cys221–Cys251, and Cys231–Cys243. A V1 region spans residues 112–156 (CNSTTAKNTTSTPTTTTTANTTIGENSSCIRTDNCTGLGEEEMVD). A V2 region spans residues 157–199 (CQFNMTGLERDKKKLYNETWYSKDVVCESKDTKKEKTCYMNHC). The interval 299 to 331 (CKRPGNKTVVPITLMSGLVFHSQPINRRPRQAW) is V3. The cysteines at positions 299 and 332 are disulfide-linked. Disulfide bonds link Cys384–Cys441 and Cys391–Cys414. The segment at 391-414 (CNMTWFLNWVENRTNQTQHNYVPC) is V4. Residues 457–463 (NQTNITF) form a V5 region. The segment at 506 to 526 (GVFVLGFLGFLTTAGAAMGAA) is fusion peptide. The tract at residues 569–585 (LQARVTAIEKYLKDQAQ) is immunosuppression. N-linked (GlcNAc...) asparagine; by host glycosylation is found at Asn605, Asn614, and Asn630. A coiled-coil region spans residues 614 to 646 (NITWQEWEQRIRNLEANISESLEQAQIQQEKNM). The tract at residues 651 to 672 (KLNSWDVFSNWFDLTSWIKYIQ) is MPER; binding to GalCer. The helical transmembrane segment at 674-694 (GVYIVVGIIVLRMVIYVVQML) threads the bilayer. Residues 695-712 (SRLRKGYRPVFSSPPAYS) are Cytoplasmic-facing. Residues 701–704 (YRPV) carry the YXXV motif; contains endocytosis signal motif.

In terms of assembly, the mature envelope protein (Env) consists of a homotrimer of non-covalently associated gp120-gp41 heterodimers. The resulting complex protrudes from the virus surface as a spike. There seems to be as few as 10 spikes on the average virion. Interacts with human CD4, CCR5 and CXCR4, to form a P4HB/PDI-CD4-CXCR4-gp120 complex. Gp120 also interacts with the C-type lectins CD209/DC-SIGN and CLEC4M/DC-SIGNR (collectively referred to as DC-SIGN(R)). Gp120 and gp41 interact with GalCer. As to quaternary structure, the mature envelope protein (Env) consists of a homotrimer of non-covalently associated gp120-gp41 heterodimers. The resulting complex protrudes from the virus surface as a spike. There seems to be as few as 10 spikes on the average virion. Specific enzymatic cleavages in vivo yield mature proteins. Envelope glycoproteins are synthesized as an inactive precursor that is heavily N-glycosylated and processed likely by host cell furin in the Golgi to yield the mature SU and TM proteins. The cleavage site between SU and TM requires the minimal sequence [KR]-X-[KR]-R.

It is found in the virion membrane. Its subcellular location is the host cell membrane. The protein resides in the host endosome membrane. In terms of biological role, the surface protein gp120 (SU) attaches the virus to the host lymphoid cell by binding to the primary receptor CD4. This interaction induces a structural rearrangement creating a high affinity binding site for a chemokine coreceptor like CXCR4 and/or CCR5. This peculiar 2 stage receptor-interaction strategy allows gp120 to maintain the highly conserved coreceptor-binding site in a cryptic conformation, protected from neutralizing antibodies. Since CD4 also displays a binding site for the disulfide-isomerase P4HB/PDI, a P4HB/PDI-CD4-CXCR4-gp120 complex may form. In that complex, P4HB/PDI could reach and reduce gp120 disulfide bonds, causing major conformational changes in gp120. TXN, another PDI family member could also be involved in disulfide rearrangements in Env during fusion. These changes are transmitted to the transmembrane protein gp41 and are thought to activate its fusogenic potential by unmasking its fusion peptide. Functionally, the surface protein gp120 is a ligand for CD209/DC-SIGN and CLEC4M/DC-SIGNR, which are respectively found on dendritic cells (DCs), and on endothelial cells of liver sinusoids and lymph node sinuses. These interactions allow capture of viral particles at mucosal surfaces by these cells and subsequent transmission to permissive cells. DCs are professional antigen presenting cells, critical for host immunity by inducing specific immune responses against a broad variety of pathogens. They act as sentinels in various tissues where they take up antigen, process it, and present it to T-cells following migration to lymphoid organs. HIV subverts the migration properties of dendritic cells to gain access to CD4+ T-cells in lymph nodes. Virus transmission to permissive T-cells occurs either in trans (without DCs infection, through viral capture and transmission), or in cis (following DCs productive infection, through the usual CD4-gp120 interaction), thereby inducing a robust infection. In trans infection, bound virions remain infectious over days and it is proposed that they are not degraded, but protected in non-lysosomal acidic organelles within the DCs close to the cell membrane thus contributing to the viral infectious potential during DCs' migration from the periphery to the lymphoid tissues. On arrival at lymphoid tissues, intact virions recycle back to DCs' cell surface allowing virus transmission to CD4+ T-cells. Virion capture also seems to lead to MHC-II-restricted viral antigen presentation, and probably to the activation of HIV-specific CD4+ cells. Its function is as follows. The transmembrane protein gp41 (TM) acts as a class I viral fusion protein. Under the current model, the protein has at least 3 conformational states: pre-fusion native state, pre-hairpin intermediate state, and post-fusion hairpin state. During fusion of viral and target intracellular membranes, the coiled coil regions (heptad repeats) assume a trimer-of-hairpins structure, positioning the fusion peptide in close proximity to the C-terminal region of the ectodomain. The formation of this structure appears to drive apposition and subsequent fusion of viral and target cell membranes. Complete fusion occurs in host cell endosomes and is dynamin-dependent, however some lipid transfer might occur at the plasma membrane. The virus undergoes clathrin-dependent internalization long before endosomal fusion, thus minimizing the surface exposure of conserved viral epitopes during fusion and reducing the efficacy of inhibitors targeting these epitopes. Membranes fusion leads to delivery of the nucleocapsid into the cytoplasm. The envelope glycoprotein gp160 precursor down-modulates cell surface CD4 antigen by interacting with it in the endoplasmic reticulum and blocking its transport to the cell surface. In terms of biological role, the gp120-gp41 heterodimer seems to contribute to T-cell depletion during HIV-1 infection. The envelope glycoproteins expressed on the surface of infected cells induce apoptosis through an interaction with uninfected cells expressing the receptor (CD4) and the coreceptors CXCR4 or CCR5. This type of bystander killing may be obtained by at least three distinct mechanisms. First, the interaction between the 2 cells can induce cellular fusion followed by nuclear fusion within the syncytium. Syncytia are condemned to die from apoptosis. Second, the 2 interacting cells may not fuse entirely and simply exchange plasma membrane lipids, after a sort of hemifusion process, followed by rapid death. Third, it is possible that virus-infected cells, on the point of undergoing apoptosis, fuse with CD4-expressing cells, in which case apoptosis is rapidly transmitted from one cell to the other and thus occurs in a sort of contagious fashion. Functionally, the gp120-gp41 heterodimer allows rapid transcytosis of the virus through CD4 negative cells such as simple epithelial monolayers of the intestinal, rectal and endocervical epithelial barriers. Both gp120 and gp41 specifically recognize glycosphingolipids galactosyl-ceramide (GalCer) or 3' sulfo-galactosyl-ceramide (GalS) present in the lipid rafts structures of epithelial cells. Binding to these alternative receptors allows the rapid transcytosis of the virus through the epithelial cells. This transcytotic vesicle-mediated transport of virions from the apical side to the basolateral side of the epithelial cells does not involve infection of the cells themselves. The polypeptide is Envelope glycoprotein gp160 (env) (Homo sapiens (Human)).